A 243-amino-acid polypeptide reads, in one-letter code: Derlin-1.1 (243 aa).

At 1–20 the chain is on the cytoplasmic side; that stretch reads MSSPAEYYKSLPPISKAYGT. Residues 21–41 traverse the membrane as a helical segment; the sequence is LCFFTTVLVQLQILHPLFLYL. Residues 42–55 lie on the Lumenal side of the membrane; it reads DYPLVFKKFEIWRL. Residues 56–76 traverse the membrane as a helical segment; that stretch reads LTSFFFLAPFSMKFGIRLLMI. Residues 77–94 are Cytoplasmic-facing; sequence ARYGVMLEKGAFDKRTAD. Residues 95-115 form a helical membrane-spanning segment; the sequence is FLWMMIFGAISLLVLSIIPLF. Over 116 to 157 the chain is Lumenal; it reads NSFFLGIPMVSMLLYVWSRENPNAQINIYGLVQLRSFYLPWA. The helical transmembrane segment at 158–178 threads the bilayer; the sequence is MLLLDVIFGSSLMPGLLGIMV. Residues 179–243 lie on the Cytoplasmic side of the membrane; that stretch reads GHLYYFFAVL…FRGRSYRLNQ (65 aa). A disordered region spans residues 219 to 243; the sequence is SPVRPPANGNSGSGVFRGRSYRLNQ.

This sequence belongs to the derlin family. In terms of tissue distribution, expressed in roots, stalks, leaves, immature ears, embryo and endosperm.

The protein resides in the endoplasmic reticulum membrane. May be involved in the degradation process of specific misfolded endoplasmic reticulum (ER) luminal proteins. This Zea mays (Maize) protein is Derlin-1.1 (DER1.1).